Consider the following 395-residue polypeptide: S-adenosylmethionine synthase (395 aa).

His-18 is a binding site for ATP. Asp-20 lines the Mg(2+) pocket. K(+) is bound at residue Glu-46. L-methionine-binding residues include Glu-59 and Gln-103. Positions 103-113 are flexible loop; sequence QSADIAVGVDS. ATP is bound by residues 170–172, Asp-244, 250–251, Ala-267, and Lys-271; these read DAK and RK. Asp-244 provides a ligand contact to L-methionine. Lys-275 provides a ligand contact to L-methionine.

This sequence belongs to the AdoMet synthase family. Homotetramer; dimer of dimers. It depends on Mg(2+) as a cofactor. The cofactor is K(+).

Its subcellular location is the cytoplasm. The enzyme catalyses L-methionine + ATP + H2O = S-adenosyl-L-methionine + phosphate + diphosphate. Its pathway is amino-acid biosynthesis; S-adenosyl-L-methionine biosynthesis; S-adenosyl-L-methionine from L-methionine: step 1/1. Functionally, catalyzes the formation of S-adenosylmethionine (AdoMet) from methionine and ATP. The overall synthetic reaction is composed of two sequential steps, AdoMet formation and the subsequent tripolyphosphate hydrolysis which occurs prior to release of AdoMet from the enzyme. In Gluconacetobacter diazotrophicus (strain ATCC 49037 / DSM 5601 / CCUG 37298 / CIP 103539 / LMG 7603 / PAl5), this protein is S-adenosylmethionine synthase.